We begin with the raw amino-acid sequence, 348 residues long: Ion-translocating oxidoreductase complex subunit D (348 aa).

Helical transmembrane passes span 20 to 39 (LMKW…TYFF), 72 to 91 (ALRD…AIPP), and 120 to 140 (PFNP…VQMT). T187 bears the FMN phosphoryl threonine mark. The next 5 membrane-spanning stretches (helical) occupy residues 214–234 (LAGV…LVLI), 241–261 (WHIP…FLMF), 266–286 (TASP…FFIA), 300–320 (LVFG…GGFP), and 321–341 (DGVA…DYYT).

This sequence belongs to the NqrB/RnfD family. The complex is composed of six subunits: RnfA, RnfB, RnfC, RnfD, RnfE and RnfG. FMN serves as cofactor.

The protein localises to the cell inner membrane. Its function is as follows. Part of a membrane-bound complex that couples electron transfer with translocation of ions across the membrane. The polypeptide is Ion-translocating oxidoreductase complex subunit D (Vibrio atlanticus (strain LGP32) (Vibrio splendidus (strain Mel32))).